Here is a 253-residue protein sequence, read N- to C-terminus: Ubiquinone biosynthesis O-methyltransferase (253 aa).

Residues Arg-47, Gly-78, Asp-99, and Met-141 each contribute to the S-adenosyl-L-methionine site.

Belongs to the methyltransferase superfamily. UbiG/COQ3 family.

The catalysed reaction is a 3-demethylubiquinol + S-adenosyl-L-methionine = a ubiquinol + S-adenosyl-L-homocysteine + H(+). The enzyme catalyses a 3-(all-trans-polyprenyl)benzene-1,2-diol + S-adenosyl-L-methionine = a 2-methoxy-6-(all-trans-polyprenyl)phenol + S-adenosyl-L-homocysteine + H(+). It functions in the pathway cofactor biosynthesis; ubiquinone biosynthesis. Its function is as follows. O-methyltransferase that catalyzes the 2 O-methylation steps in the ubiquinone biosynthetic pathway. The chain is Ubiquinone biosynthesis O-methyltransferase from Rhodopseudomonas palustris (strain ATCC BAA-98 / CGA009).